Consider the following 63-residue polypeptide: Large ribosomal subunit protein bL32 (63 aa).

The span at Met-1 to Ala-18 shows a compositional bias: basic residues. Positions Met-1–Lys-25 are disordered.

This sequence belongs to the bacterial ribosomal protein bL32 family.

The chain is Large ribosomal subunit protein bL32 from Chlorobium phaeovibrioides (strain DSM 265 / 1930) (Prosthecochloris vibrioformis (strain DSM 265)).